Consider the following 160-residue polypeptide: Protein max (160 aa).

Positions Met1–Glu13 are enriched in acidic residues. The interval Met1 to Lys40 is disordered. Ser2 carries the N-acetylserine modification. Phosphoserine is present on residues Ser2 and Ser11. In terms of domain architecture, bHLH spans Asp23–Met74. A compositionally biased stretch (basic and acidic residues) spans Asn29–Lys40. Position 66 is an N6-acetyllysine (Lys66). Residues His81–Leu102 are leucine-zipper. The interval Lys104–Ser160 is disordered. Position 107 is a phosphoserine (Ser107). Positions Ser107–Thr124 are enriched in polar residues. Residues Lys153 and Lys154 each carry the N6-acetyllysine modification.

It belongs to the MAX family. Efficient DNA binding requires dimerization with another bHLH protein. Binds DNA as a heterodimer with MYC or MAD. Part of the E2F6.com-1 complex in G0 phase composed of E2F6, MGA, MAX, TFDP1, CBX3, BAT8, EUHMTASE1, RING1, RNF2, MBLR, L3MBTL2 and YAF2. Component of some MLL1/MLL complex, at least composed of the core components KMT2A/MLL1, ASH2L, HCFC1/HCF1, WDR5 and RBBP5, as well as the facultative components BACC1, CHD8, E2F6, HSP70, INO80C, KANSL1, LAS1L, MAX, MCRS1, MGA, MYST1/MOF, PELP1, PHF20, PRP31, RING2, RUVB1/TIP49A, RUVB2/TIP49B, SENP3, TAF1, TAF4, TAF6, TAF7, TAF9 and TEX10. Interacts with SPAG9. The heterodimer MYC:MAX interacts with ABI1; the interaction may enhance MYC:MAX transcriptional activity. In terms of processing, phosphorylated.

The protein localises to the nucleus. The protein resides in the cell projection. It localises to the dendrite. Its function is as follows. Transcription regulator. Forms a sequence-specific DNA-binding protein complex with MYC or MAD which recognizes the core sequence 5'-CAC[GA]TG-3'. The MYC:MAX complex is a transcriptional activator, whereas the MAD:MAX complex is a repressor. CpG methylation of the recognition site greatly inhibits DNA binding, suggesting that DNA methylation may regulate the MYC:MAX complex in vivo. May repress transcription via the recruitment of a chromatin remodeling complex containing H3 'Lys-9' histone methyltransferase activity. Represses MYC transcriptional activity from E-box elements. This Mus musculus (Mouse) protein is Protein max.